The following is a 200-amino-acid chain: NADH-quinone oxidoreductase subunit C (200 aa).

This sequence belongs to the complex I 30 kDa subunit family. As to quaternary structure, NDH-1 is composed of 14 different subunits. Subunits NuoB, C, D, E, F, and G constitute the peripheral sector of the complex.

It is found in the cell inner membrane. The enzyme catalyses a quinone + NADH + 5 H(+)(in) = a quinol + NAD(+) + 4 H(+)(out). Functionally, NDH-1 shuttles electrons from NADH, via FMN and iron-sulfur (Fe-S) centers, to quinones in the respiratory chain. The immediate electron acceptor for the enzyme in this species is believed to be ubiquinone. Couples the redox reaction to proton translocation (for every two electrons transferred, four hydrogen ions are translocated across the cytoplasmic membrane), and thus conserves the redox energy in a proton gradient. This is NADH-quinone oxidoreductase subunit C from Parvibaculum lavamentivorans (strain DS-1 / DSM 13023 / NCIMB 13966).